A 72-amino-acid chain; its full sequence is Protein CYSTEINE-RICH TRANSMEMBRANE MODULE 1 (72 aa).

Polar residues predominate over residues 1–11 (MSQYDHNQSAG). A disordered region spans residues 1–46 (MSQYDHNQSAGANPPPPMSTCTSPPPPIGYPTNQPSHGSVAQGKVE). Residues 13 to 29 (NPPPPMSTCTSPPPPIG) are compositionally biased toward pro residues. The helical transmembrane segment at 49 to 65 (SKGDGFFKGCLAAMCCC) threads the bilayer.

Belongs to the CYSTM1 family. In terms of assembly, heterodimers. Binds weakly to CYSTM7 and WIH1/CYSTM13. In terms of tissue distribution, mostly expressed in roots, flowers and siliques and, to a lower extent, in stems and leaves.

It localises to the cell membrane. Its subcellular location is the nucleus. Functionally, may be involved in aluminium (Al) tolerance. Involved in resistance to abiotic stress. This chain is Protein CYSTEINE-RICH TRANSMEMBRANE MODULE 1, found in Arabidopsis thaliana (Mouse-ear cress).